The chain runs to 632 residues: MTVPEIFDVIVIGGGHAGTEAALAAARIGQKTLLLSHNIETLGQMSCNPSIGGIGKGHLVKEIDALGGVMAEAADEAGIQFRILNSRKGPAVRATRAQADRVLYRQAIRQRLESQPNLWLFQQGVDDLVLEGERVAGVVTQLGIRFNARAVILTAGTFLAGLAHVGSANFQAGRAGDLPSNSLAGRLRELKLPVGRLKTGTPPRIDGRTIDYSAVAAQPGDAPVPVFSFMGNAASHPKQVSCWITHTNSQTHDIIRSGLDRSPLFSGAIEGIGPRYCPSIEDKVVRFSAKESHQIFLEPEGLTTHEVYPNGISTSLPFDMQVKLVRSIKGLENAHITRPGYAIEYDYFDPRALKSSLETRMIEGLFFAGQINGTTGYEEAAAQGLLAGINAALKTQDREPWCPRRDEAYLGVLVDDLITRGVTEPYRMFTSRAEYRLQLREDNADLRLTEVGRRLGVVNDARWVAFNIKLEAIAQEQNRLKTTWLSPKSLSETDALRVIGKNIEHECSLHDLLRRPNVSYAELMTLPGAGEPVVDLAAAEQVEIQAKYQGYIERQKDEVARNAYYEDIRLPQDLDYKTVRGLSNEVQQKLNQFKPETAGQASRISGITPAAISLLLVHVKRGFSSANTKKSA.

FAD is bound by residues 13 to 18, valine 125, and serine 180; that span reads GGGHAG. 273 to 287 is a binding site for NAD(+); that stretch reads GPRYCPSIEDKVVRF. Glutamine 370 is a binding site for FAD.

The protein belongs to the MnmG family. As to quaternary structure, homodimer. Heterotetramer of two MnmE and two MnmG subunits. FAD is required as a cofactor.

It is found in the cytoplasm. In terms of biological role, NAD-binding protein involved in the addition of a carboxymethylaminomethyl (cmnm) group at the wobble position (U34) of certain tRNAs, forming tRNA-cmnm(5)s(2)U34. The protein is tRNA uridine 5-carboxymethylaminomethyl modification enzyme MnmG of Nitrosospira multiformis (strain ATCC 25196 / NCIMB 11849 / C 71).